Here is a 185-residue protein sequence, read N- to C-terminus: NADH-quinone oxidoreductase subunit B (185 aa).

[4Fe-4S] cluster-binding residues include C38, C39, C104, and C133.

The protein belongs to the complex I 20 kDa subunit family. NDH-1 is composed of 14 different subunits. Subunits NuoB, C, D, E, F, and G constitute the peripheral sector of the complex. [4Fe-4S] cluster is required as a cofactor.

It localises to the cell membrane. The catalysed reaction is a quinone + NADH + 5 H(+)(in) = a quinol + NAD(+) + 4 H(+)(out). NDH-1 shuttles electrons from NADH, via FMN and iron-sulfur (Fe-S) centers, to quinones in the respiratory chain. The immediate electron acceptor for the enzyme in this species is believed to be a menaquinone. Couples the redox reaction to proton translocation (for every two electrons transferred, four hydrogen ions are translocated across the cytoplasmic membrane), and thus conserves the redox energy in a proton gradient. The polypeptide is NADH-quinone oxidoreductase subunit B (Cutibacterium acnes (strain DSM 16379 / KPA171202) (Propionibacterium acnes)).